Reading from the N-terminus, the 488-residue chain is NADH-ubiquinone oxidoreductase chain 2 (488 aa).

The next 14 helical transmembrane spans lie at 11–31 (MIKY…SISI), 38–58 (MMLL…LLTI), 74–94 (ELIT…ISMF), 106–126 (ITEE…ISME), 129–149 (NLIT…ILAL), 162–182 (LKYY…IVSI), 211–231 (IALI…HGWL), 239–259 (GMLM…IVLI), 271–291 (IEVI…VGTV), 299–319 (VIRF…LFFV), 331–351 (IYYL…IIGV), 376–396 (IGIS…FTNF), 412–434 (IYIT…NVVK), and 460–480 (IVGG…IISI).

This sequence belongs to the complex I subunit 2 family.

It is found in the mitochondrion inner membrane. The catalysed reaction is a ubiquinone + NADH + 5 H(+)(in) = a ubiquinol + NAD(+) + 4 H(+)(out). Functionally, core subunit of the mitochondrial membrane respiratory chain NADH dehydrogenase (Complex I) that is believed to belong to the minimal assembly required for catalysis. Complex I functions in the transfer of electrons from NADH to the respiratory chain. The immediate electron acceptor for the enzyme is believed to be ubiquinone. The sequence is that of NADH-ubiquinone oxidoreductase chain 2 (nad2) from Dictyostelium discoideum (Social amoeba).